A 313-amino-acid chain; its full sequence is MRTIKVGSRRSKLAMTQTKWVINKLKELNPSYNFEIREIVTKGDRILDVTLSKVGGKGLFVKEIEQALLHQEIDMAVHSMKDMPAVLPEGLVIGCIPKREDPRDALISKGHQKLDGIKEGGIIGTSSLRRSAQILAERPDLTIKWIRGNIDTRLQKLETEDYDAIILAAAGLSRMGWKDDVVSEFLEPDRCLPAVGQGALAIECRESDEELLKLFAQFTDEYTQRTVAAERAFLHAMEGGCQVPIAGYASVNDRDEVELVGLVASPDGKTIYKETAAGHDPEEIGKRCAAMMSEKGAKALIDSVKQELDQDGK.

C241 carries the S-(dipyrrolylmethanemethyl)cysteine modification.

This sequence belongs to the HMBS family. Monomer. It depends on dipyrromethane as a cofactor.

The enzyme catalyses 4 porphobilinogen + H2O = hydroxymethylbilane + 4 NH4(+). The protein operates within porphyrin-containing compound metabolism; protoporphyrin-IX biosynthesis; coproporphyrinogen-III from 5-aminolevulinate: step 2/4. In terms of biological role, tetrapolymerization of the monopyrrole PBG into the hydroxymethylbilane pre-uroporphyrinogen in several discrete steps. This Bacillus velezensis (strain DSM 23117 / BGSC 10A6 / LMG 26770 / FZB42) (Bacillus amyloliquefaciens subsp. plantarum) protein is Porphobilinogen deaminase.